Consider the following 168-residue polypeptide: ATP synthase subunit b (168 aa).

A helical membrane pass occupies residues 9 to 29; the sequence is AIPFGTIAYTLFIFLILLVML.

The protein belongs to the ATPase B chain family. As to quaternary structure, F-type ATPases have 2 components, F(1) - the catalytic core - and F(0) - the membrane proton channel. F(1) has five subunits: alpha(3), beta(3), gamma(1), delta(1), epsilon(1). F(0) has three main subunits: a(1), b(2) and c(10-14). The alpha and beta chains form an alternating ring which encloses part of the gamma chain. F(1) is attached to F(0) by a central stalk formed by the gamma and epsilon chains, while a peripheral stalk is formed by the delta and b chains.

The protein localises to the cell membrane. In terms of biological role, f(1)F(0) ATP synthase produces ATP from ADP in the presence of a proton or sodium gradient. F-type ATPases consist of two structural domains, F(1) containing the extramembraneous catalytic core and F(0) containing the membrane proton channel, linked together by a central stalk and a peripheral stalk. During catalysis, ATP synthesis in the catalytic domain of F(1) is coupled via a rotary mechanism of the central stalk subunits to proton translocation. Functionally, component of the F(0) channel, it forms part of the peripheral stalk, linking F(1) to F(0). The chain is ATP synthase subunit b from Bacillus cereus (strain G9842).